The chain runs to 433 residues: Methylenetetrahydrofolate--tRNA-(uracil-5-)-methyltransferase TrmFO (433 aa).

7-12 (GGGLAG) is an FAD binding site.

The protein belongs to the MnmG family. TrmFO subfamily. Requires FAD as cofactor.

The protein localises to the cytoplasm. The enzyme catalyses uridine(54) in tRNA + (6R)-5,10-methylene-5,6,7,8-tetrahydrofolate + NADH + H(+) = 5-methyluridine(54) in tRNA + (6S)-5,6,7,8-tetrahydrofolate + NAD(+). It catalyses the reaction uridine(54) in tRNA + (6R)-5,10-methylene-5,6,7,8-tetrahydrofolate + NADPH + H(+) = 5-methyluridine(54) in tRNA + (6S)-5,6,7,8-tetrahydrofolate + NADP(+). Catalyzes the folate-dependent formation of 5-methyl-uridine at position 54 (M-5-U54) in all tRNAs. The sequence is that of Methylenetetrahydrofolate--tRNA-(uracil-5-)-methyltransferase TrmFO from Natranaerobius thermophilus (strain ATCC BAA-1301 / DSM 18059 / JW/NM-WN-LF).